The following is a 493-amino-acid chain: Cytochrome P450 monooxygenase olcG (493 aa).

The chain crosses the membrane as a helical span at residues 15-35; the sequence is GILATGALVIFVALFLATFQF. Heme is bound at residue cysteine 429.

This sequence belongs to the cytochrome P450 family. The cofactor is heme.

The protein resides in the membrane. It functions in the pathway secondary metabolite biosynthesis; terpenoid biosynthesis. In terms of biological role, cytochrome P450 monooxygenase; part of the gene cluster that mediates the biosynthesis of 15-deoxyoxalicine B. The first step of the pathway is the synthesis of nicotinyl-CoA from nicotinic acid by the nicotinic acid-CoA ligase olcI. Nicotinyl-CoA is then a substrate of polyketide synthase olcA to produce 4-hydroxy-6-(3-pyridinyl)-2H-pyran-2-one (HPPO) which is further prenylated by the polyprenyl transferase olcH to yield geranylgeranyl-HPPO. Geranylgeranyl pyrophosphate is provided by the cluster-specific geranylgeranyl pyrophosphate synthase olcC. The FAD-dependent monooxygenase olcE catalyzes the epoxidation of geranylgeranyl-HPPO and the terpene cyclase olcD catalyzes the cyclization of the terpenoid component, resulting in the formation of the tricyclic terpene moiety seen in predecaturin E. The cytochrome P450 monooxygenase then catalyzes the allylic oxidation of predecaturin E, which is followed by spirocylization with concomitant loss of one molecule of water to form decaturin E. Decaturin E is the substrate of the cytochrome P450 monooxygenase olcJ which hydroxylates it at the C-29 position to form decaturin F. The short-chain dehydrogenase/reductase olcF may catalyze the oxidation of decaturin F to generate the 29-hydroxyl-27-one intermediate, and subsequent hemiacetal formation probably leads to the formation of decaturin C. The dioxygenase olcK may be a peroxisomal enzyme that catalyzes the hydroxylation of decaturin C into decaturin A once decaturin C is shuttled into the peroxisome by the MFS transporter olcL. Finally the cytochrome P450 monooxygenase olcB catalyzes the oxidative rearrangement to yield 15-deoxyoxalicine B. In the absence of olcJ, decaturin E may be shunted to a pathway in which it is oxidized to a ketone, possibly by olcF, to form decaturin D, which undergoes further allylic oxidation to yield decaturin G. Moreover, in the absence of oclK or oclL, oclB can convert decaturin C into 15-deoxyoxalicine A. The protein is Cytochrome P450 monooxygenase olcG of Penicillium canescens.